The sequence spans 238 residues: NADH-quinone oxidoreductase subunit C (238 aa).

The tract at residues 1–20 (MSSPDQNPSDAAGQTGSSNE) is disordered.

It belongs to the complex I 30 kDa subunit family. NDH-1 is composed of 14 different subunits. Subunits NuoB, C, D, E, F, and G constitute the peripheral sector of the complex.

It localises to the cell membrane. It carries out the reaction a quinone + NADH + 5 H(+)(in) = a quinol + NAD(+) + 4 H(+)(out). Functionally, NDH-1 shuttles electrons from NADH, via FMN and iron-sulfur (Fe-S) centers, to quinones in the respiratory chain. The immediate electron acceptor for the enzyme in this species is believed to be a menaquinone. Couples the redox reaction to proton translocation (for every two electrons transferred, four hydrogen ions are translocated across the cytoplasmic membrane), and thus conserves the redox energy in a proton gradient. The sequence is that of NADH-quinone oxidoreductase subunit C from Mycobacterium marinum (strain ATCC BAA-535 / M).